The primary structure comprises 115 residues: Evasin P1183 (115 aa).

A signal peptide spans methionine 1–leucine 25. Cystine bridges form between cysteine 38/cysteine 58, cysteine 54/cysteine 94, cysteine 70/cysteine 99, and cysteine 89/cysteine 108. N-linked (GlcNAc...) asparagine glycans are attached at residues asparagine 45, asparagine 72, and asparagine 103.

Its subcellular location is the secreted. Its function is as follows. Salivary chemokine-binding protein which binds to host chemokine CCL2. This chain is Evasin P1183, found in Amblyomma triste (Neotropical tick).